Consider the following 242-residue polypeptide: Biosynthetic peptidoglycan transglycosylase (242 aa).

A helical membrane pass occupies residues 19-39 (ILAALAVFWGGGIALFSVVPV).

This sequence belongs to the glycosyltransferase 51 family.

The protein resides in the cell inner membrane. The catalysed reaction is [GlcNAc-(1-&gt;4)-Mur2Ac(oyl-L-Ala-gamma-D-Glu-L-Lys-D-Ala-D-Ala)](n)-di-trans,octa-cis-undecaprenyl diphosphate + beta-D-GlcNAc-(1-&gt;4)-Mur2Ac(oyl-L-Ala-gamma-D-Glu-L-Lys-D-Ala-D-Ala)-di-trans,octa-cis-undecaprenyl diphosphate = [GlcNAc-(1-&gt;4)-Mur2Ac(oyl-L-Ala-gamma-D-Glu-L-Lys-D-Ala-D-Ala)](n+1)-di-trans,octa-cis-undecaprenyl diphosphate + di-trans,octa-cis-undecaprenyl diphosphate + H(+). The protein operates within cell wall biogenesis; peptidoglycan biosynthesis. In terms of biological role, peptidoglycan polymerase that catalyzes glycan chain elongation from lipid-linked precursors. The protein is Biosynthetic peptidoglycan transglycosylase of Salmonella paratyphi B (strain ATCC BAA-1250 / SPB7).